Consider the following 267-residue polypeptide: MKEKRLIIKRSGYPSKGEIVIGTVKRVLDFGAFVSLDEYEGREGMVHISEVASGWIKDIREHVKKGQKVICKVLDVNPKRGHIDLSIKDVNERQRREKLQQWKNEMKAFKWLEIIGEKLNIDFKELEKIGKKLMKEYDSVYSAFEEAAFEGYEVLAPIVGEEFAKEMAEIARENIKPKRVKVRGYFELKSSASDGIERIKKALLEAKKALVNGVEMKLEYVGAPKYRIVVEADDYKTAENVLKKATENVLKAIKKLGGEGNFIREAA.

Residues 17 to 88 form the S1 motif domain; that stretch reads GEIVIGTVKR…KRGHIDLSIK (72 aa).

The protein belongs to the eIF-2-alpha family. In terms of assembly, heterotrimer composed of an alpha, a beta and a gamma chain.

EIF-2 functions in the early steps of protein synthesis by forming a ternary complex with GTP and initiator tRNA. This is Translation initiation factor 2 subunit alpha (eif2a) from Archaeoglobus fulgidus (strain ATCC 49558 / DSM 4304 / JCM 9628 / NBRC 100126 / VC-16).